The chain runs to 412 residues: Branched-chain alpha-ketoacid dehydrogenase kinase (412 aa).

Residues 1 to 30 (MILASVLGSGPRGGPPLRPLLGPALSLRAR) constitute a mitochondrion transit peptide. Phosphoserine is present on Ser31. Ser52 bears the Phosphoserine; by autocatalysis mark. The Histidine kinase domain maps to 159-404 (LDDHKDVVTL…DVYLRLRHID (246 aa)). N6-acetyllysine occurs at positions 192 and 233. The ATP site is built by Asn279 and Asp315. Position 279 (Asn279) interacts with Mg(2+). K(+) is bound by residues Val328, Asp330, and Phe333. ATP-binding residues include Thr334 and Thr335. Ser356 and Ser360 each carry phosphoserine. The ATP site is built by His364, Gly367, and Leu370. Gly367 is a K(+) binding site.

This sequence belongs to the PDK/BCKDK protein kinase family. In terms of assembly, homodimer. Homotetramer. Dimerizes through interaction of two opposing nucleotide-binding domains. Interacts with E2 component of the branched-chain alpha-ketoacid dehydrogenase (BCKDH) complex. Competes with BCKDK for binding to the E2 component; this interaction is modulated by branched-chain alpha-keto acids. At steady state, BCKDH holoenzyme contains BCKDK and BCKDHA is phosphorylated. In response to high levels of branched-chain alpha-keto acids, the inhibitory BCKDK is replaced by activating PPM1K leading to BCKDHA dephosphorylation and BCAA degradation. Autophosphorylated.

It is found in the mitochondrion matrix. Its subcellular location is the mitochondrion. It carries out the reaction L-seryl-[3-methyl-2-oxobutanoate dehydrogenase] + ATP = O-phospho-L-seryl-[3-methyl-2-oxobutanoate dehydrogenase] + ADP + H(+). The enzyme catalyses L-seryl-[protein] + ATP = O-phospho-L-seryl-[protein] + ADP + H(+). Its function is as follows. Serine/threonine-protein kinase component of macronutrients metabolism. Forms a functional kinase and phosphatase pair with PPM1K, serving as a metabolic regulatory node that coordinates branched-chain amino acids (BCAAs) with glucose and lipid metabolism via two distinct phosphoprotein targets: mitochondrial BCKDHA subunit of the branched-chain alpha-ketoacid dehydrogenase (BCKDH) complex and cytosolic ACLY, a lipogenic enzyme of Krebs cycle. Phosphorylates and inactivates mitochondrial BCKDH complex a multisubunit complex consisting of three multimeric components each involved in different steps of BCAA catabolism: E1 composed of BCKDHA and BCKDHB, E2 core composed of DBT monomers, and E3 composed of DLD monomers. Associates with the E2 component of BCKDH complex and phosphorylates BCKDHA on Ser-347, leading to conformational changes that interrupt substrate channeling between E1 and E2 and inactivates the BCKDH complex. Phosphorylates ACLY on Ser-455 in response to changes in cellular carbohydrate abundance such as occurs during fasting to feeding metabolic transition. Refeeding stimulates MLXIPL/ChREBP transcription factor, leading to increased BCKDK to PPM1K expression ratio, phosphorylation and activation of ACLY that ultimately results in the generation of malonyl-CoA and oxaloacetate immediate substrates of de novo lipogenesis and glucogenesis, respectively. Recognizes phosphosites having SxxE/D canonical motif. In Bos taurus (Bovine), this protein is Branched-chain alpha-ketoacid dehydrogenase kinase (BCKDK).